A 142-amino-acid chain; its full sequence is Hemoglobin subunit alpha (142 aa).

The Globin domain maps to 2-142 (VLSATDKSNV…VSTVLTSKYR (141 aa)). The residue at position 4 (Ser4) is a Phosphoserine. An N6-succinyllysine mark is found at Lys8 and Lys12. Lys17 is modified (N6-acetyllysine; alternate). Position 17 is an N6-succinyllysine; alternate (Lys17). A Phosphotyrosine modification is found at Tyr25. The residue at position 36 (Ser36) is a Phosphoserine. An N6-succinyllysine modification is found at Lys41. Phosphoserine is present on Ser50. Residue His59 coordinates O2. A heme b-binding site is contributed by His88. A Phosphoserine modification is found at Ser103. Position 109 is a phosphothreonine (Thr109). Position 125 is a phosphoserine (Ser125). Thr135 and Thr138 each carry phosphothreonine. Phosphoserine is present on Ser139.

Belongs to the globin family. As to quaternary structure, heterotetramer of two alpha chains and two beta chains. Red blood cells.

Involved in oxygen transport from the lung to the various peripheral tissues. In terms of biological role, hemopressin acts as an antagonist peptide of the cannabinoid receptor CNR1. Hemopressin-binding efficiently blocks cannabinoid receptor CNR1 and subsequent signaling. This Alces alces alces (European moose) protein is Hemoglobin subunit alpha (HBA).